We begin with the raw amino-acid sequence, 90 residues long: UPF0237 protein MJ1558 (90 aa).

The ACT domain maps to 5-79; it reads VVSVIGQDRT…EELGVQVIVQ (75 aa).

This sequence belongs to the UPF0237 family.

The protein is UPF0237 protein MJ1558 of Methanocaldococcus jannaschii (strain ATCC 43067 / DSM 2661 / JAL-1 / JCM 10045 / NBRC 100440) (Methanococcus jannaschii).